Here is a 333-residue protein sequence, read N- to C-terminus: Eukaryotic translation initiation factor 2 subunit 2 (333 aa).

2 disordered regions span residues 1-120 and 139-165; these read MSGD…LDIM and ILEK…QTGP. Serine 2 is modified (N-acetylserine). Phosphoserine is present on serine 2. Serine 13 bears the Phosphoserine; by PKC; in vitro mark. The segment covering 13–22 has biased composition (basic residues); the sequence is SKKKKKKKKP. Threonine 36 carries the phosphothreonine modification. Residues 40–51 show a composition bias toward basic and acidic residues; the sequence is ETKEVEPEPTED. At serine 67 the chain carries Phosphoserine; by CK2. Over residues 96 to 105 the composition is skewed to basic and acidic residues; the sequence is EGVKDLKIEN. Lysine 102 is covalently cross-linked (Glycyl lysine isopeptide (Lys-Gly) (interchain with G-Cter in SUMO2)). Composition is skewed to acidic residues over residues 106 to 118 and 139 to 149; these read DVQE…DDLD and ILEKDEALEDE. Phosphoserine is present on serine 158. The residue at position 218 (serine 218) is a Phosphoserine; by PKA; in vitro. Residues lysine 265 and lysine 293 each carry the N6-acetyllysine modification. The segment at 281–305 adopts a C4-type zinc-finger fold; that stretch reads CHTCRSPDTILQKDTRLYFLQCETC.

Belongs to the eIF-2-beta/eIF-5 family. Eukaryotic translation initiation factor 2 eIF2 is a heterotrimeric complex composed of an alpha (EIF2S1), a beta (EIF2S2) and a gamma (EIF2S3) chain. eIF2 is member of the 43S pre-initiation complex (43S PIC). eIF2 forms a complex with at least CELF1/CUGBP1, CALR, CALR3, EIF2S1, EIF2S2, HSP90B1 and HSPA5. Interacts with BZW2/5MP1. Interacts with EIF5. Post-translationally, the N-terminus is blocked.

Its subcellular location is the cytoplasm. It is found in the cytosol. Its function is as follows. Component of the eIF2 complex that functions in the early steps of protein synthesis by forming a ternary complex with GTP and initiator tRNA. This complex binds to a 40S ribosomal subunit, followed by mRNA binding to form the 43S pre-initiation complex (43S PIC). Junction of the 60S ribosomal subunit to form the 80S initiation complex is preceded by hydrolysis of the GTP bound to eIF2 and release of an eIF2-GDP binary complex. In order for eIF2 to recycle and catalyze another round of initiation, the GDP bound to eIF2 must exchange with GTP by way of a reaction catalyzed by eIF2B. This Oryctolagus cuniculus (Rabbit) protein is Eukaryotic translation initiation factor 2 subunit 2 (EIF2S2).